The primary structure comprises 74 residues: Large ribosomal subunit protein bL31 (74 aa).

The protein belongs to the bacterial ribosomal protein bL31 family. Type A subfamily. As to quaternary structure, part of the 50S ribosomal subunit.

Binds the 23S rRNA. This Synechococcus sp. (strain JA-2-3B'a(2-13)) (Cyanobacteria bacterium Yellowstone B-Prime) protein is Large ribosomal subunit protein bL31.